A 462-amino-acid chain; its full sequence is MDTSGNPNGYYSAHLNPESDDLWSVLPKKYPGQLTEGILEEILEIESRLSRSKKNLKDAQKENRAFLVGVYPERSVGRHPSLSMEELKELCRTAEVHVVDTFIQRKNRLDPSTVLGKGKLEEIILKAIQKHVELLVFDLELTPSQAKKISDIADIKVIDRTQLILDIFARNAKSRDGKLQVELAQLKYLKGRLTELDDNMSRLTGGIGGRGPGETKLEIGKRRVEERITRLEVELKSLKKRREINRRQRKRNELPAVGIVGYTNAGKSTFLNALTNSEILSENKLFATLDPTTRRIRFPEEREIIISDTVGFIHDLPPELSNAFKATLEELGDSDLLVHVVDVSNPDYKLQMEAVEKILEELELSHIPMIQVFNKIDNLEKFKTWKIESDSNGYKTFSHPSINHGPGLEAIADLKEELGIDVHSDTVLVSAYQGWGLKAFLDLLEEKIYNLPRLNYSIAEKL.

One can recognise a Hflx-type G domain in the interval 255–452 (PAVGIVGYTN…LLEEKIYNLP (198 aa)). Residues 261–268 (GYTNAGKS), 286–290 (FATLD), 308–311 (DTVG), 374–377 (NKID), and 430–432 (SAY) contribute to the GTP site. 2 residues coordinate Mg(2+): S268 and T288.

Belongs to the TRAFAC class OBG-HflX-like GTPase superfamily. HflX GTPase family. Monomer. Associates with the 50S ribosomal subunit. Mg(2+) serves as cofactor.

It is found in the cytoplasm. GTPase that associates with the 50S ribosomal subunit and may have a role during protein synthesis or ribosome biogenesis. The polypeptide is GTPase HflX (Leptospira borgpetersenii serovar Hardjo-bovis (strain JB197)).